The sequence spans 214 residues: Quinolone resistance pentapeptide repeat protein QnrB96 (214 aa).

Pentapeptide repeat domains lie at 23–103 and 116–189; these read STFH…SFMN and ITNT…VRGV.

The protein belongs to the pentapeptide repeat protein family.

In terms of biological role, confers reduced sensitivity to the fluoroquinolone antibiotic ciprofloxacin (five-fold increase in minimum inhibitory concentration) when expressed in E.coli. The protein is Quinolone resistance pentapeptide repeat protein QnrB96 of Scandinavium goeteborgense.